The sequence spans 332 residues: GTP 3',8-cyclase (332 aa).

The Radical SAM core domain maps to 9–220 (RFARKVDYLR…DQVRERIAER (212 aa)). R18 contributes to the GTP binding site. Residues C25 and C29 each coordinate [4Fe-4S] cluster. Y31 provides a ligand contact to S-adenosyl-L-methionine. C32 serves as a coordination point for [4Fe-4S] cluster. R67 serves as a coordination point for GTP. Residue G71 participates in S-adenosyl-L-methionine binding. T98 serves as a coordination point for GTP. S122 lines the S-adenosyl-L-methionine pocket. Residue K159 participates in GTP binding. S-adenosyl-L-methionine is bound at residue M193. C258 and C261 together coordinate [4Fe-4S] cluster. 263–265 (RVR) contributes to the GTP binding site. Residue C275 participates in [4Fe-4S] cluster binding.

Belongs to the radical SAM superfamily. MoaA family. Monomer and homodimer. [4Fe-4S] cluster is required as a cofactor.

The catalysed reaction is GTP + AH2 + S-adenosyl-L-methionine = (8S)-3',8-cyclo-7,8-dihydroguanosine 5'-triphosphate + 5'-deoxyadenosine + L-methionine + A + H(+). Its pathway is cofactor biosynthesis; molybdopterin biosynthesis. Catalyzes the cyclization of GTP to (8S)-3',8-cyclo-7,8-dihydroguanosine 5'-triphosphate. The polypeptide is GTP 3',8-cyclase (Pseudomonas syringae pv. syringae (strain B728a)).